The primary structure comprises 636 residues: Threonine--tRNA ligase (636 aa).

Residues 1-61 (MPVITLPDGS…TQDASLQLIT (61 aa)) form the TGS domain. Positions 243-534 (DHRKIGKTLD…LIEEFTGKFP (292 aa)) are catalytic. Residues cysteine 334, histidine 385, and histidine 511 each coordinate Zn(2+).

Belongs to the class-II aminoacyl-tRNA synthetase family. As to quaternary structure, homodimer. The cofactor is Zn(2+).

The protein resides in the cytoplasm. The catalysed reaction is tRNA(Thr) + L-threonine + ATP = L-threonyl-tRNA(Thr) + AMP + diphosphate + H(+). In terms of biological role, catalyzes the attachment of threonine to tRNA(Thr) in a two-step reaction: L-threonine is first activated by ATP to form Thr-AMP and then transferred to the acceptor end of tRNA(Thr). Also edits incorrectly charged L-seryl-tRNA(Thr). This chain is Threonine--tRNA ligase, found in Colwellia psychrerythraea (strain 34H / ATCC BAA-681) (Vibrio psychroerythus).